The following is a 147-amino-acid chain: D-aminoacyl-tRNA deacylase (147 aa).

The Gly-cisPro motif, important for rejection of L-amino acids signature appears at 137–138 (GP).

The protein belongs to the DTD family. In terms of assembly, homodimer.

The protein localises to the cytoplasm. The enzyme catalyses glycyl-tRNA(Ala) + H2O = tRNA(Ala) + glycine + H(+). The catalysed reaction is a D-aminoacyl-tRNA + H2O = a tRNA + a D-alpha-amino acid + H(+). An aminoacyl-tRNA editing enzyme that deacylates mischarged D-aminoacyl-tRNAs. Also deacylates mischarged glycyl-tRNA(Ala), protecting cells against glycine mischarging by AlaRS. Acts via tRNA-based rather than protein-based catalysis; rejects L-amino acids rather than detecting D-amino acids in the active site. By recycling D-aminoacyl-tRNA to D-amino acids and free tRNA molecules, this enzyme counteracts the toxicity associated with the formation of D-aminoacyl-tRNA entities in vivo and helps enforce protein L-homochirality. This Acinetobacter baumannii (strain ATCC 17978 / DSM 105126 / CIP 53.77 / LMG 1025 / NCDC KC755 / 5377) protein is D-aminoacyl-tRNA deacylase.